Reading from the N-terminus, the 254-residue chain is Esterase YbfF (254 aa).

Active-site residues include Ser89 and His234.

This sequence belongs to the DmpD/TodF/XylF esterase family.

Functionally, displays esterase activity toward palmitoyl-CoA, malonyl-CoA and pNP-butyrate. This chain is Esterase YbfF (ybfF), found in Escherichia coli (strain K12).